A 516-amino-acid chain; its full sequence is Probable inactive beta-glucosidase 14 (516 aa).

The first 23 residues, 1–23 (MAAAWLVVLLTVHRLLHLSGVSA), serve as a signal peptide directing secretion. A beta-D-glucoside is bound by residues Gln43, His145, and 190-191 (NQ). N-linked (GlcNAc...) asparagine glycosylation is present at Asn193. Cys210 and Cys217 form a disulfide bridge. 2 N-linked (GlcNAc...) asparagine glycosylation sites follow: Asn221 and Asn270. Residue Tyr334 participates in a beta-D-glucoside binding. An intrachain disulfide couples Cys342 to Cys347. Glu405 contacts a beta-D-glucoside. The Nucleophile role is filled by Glu405. N-linked (GlcNAc...) asparagine glycosylation is found at Asn415 and Asn423. A beta-D-glucoside is bound by residues Trp454, 461–462 (EW), and Phe470.

This sequence belongs to the glycosyl hydrolase 1 family. As to expression, expressed in flowers and endosperm.

The chain is Probable inactive beta-glucosidase 14 from Oryza sativa subsp. japonica (Rice).